We begin with the raw amino-acid sequence, 399 residues long: La protein 2 (399 aa).

The region spanning 3–106 is the HTH La-type RNA-binding domain; sequence SSFNEETAKK…GRGTKLSKPE (104 aa). The 78-residue stretch at 115–192 folds into the RRM domain; that stretch reads RTLAASPFEY…ADLVLIPKSD (78 aa). The 131-residue stretch at 269 to 399 folds into the xRRM domain; sequence SLCKDNTDQL…QPTKKARKEP (131 aa). The tract at residues 367–399 is disordered; that stretch reads AELEGGKEGHKKEKGKDECFENVQPTKKARKEP. The span at 370 to 385 shows a compositional bias: basic and acidic residues; that stretch reads EGGKEGHKKEKGKDEC.

In terms of tissue distribution, expressed ubiquitously (at protein level).

It localises to the nucleus. It is found in the nucleoplasm. Its subcellular location is the nucleolus. Functionally, binds to the 3' poly(U) terminus of nascent RNA polymerase III transcripts, protecting them from exonuclease digestion and facilitating their folding and maturation. The polypeptide is La protein 2 (LA2) (Arabidopsis thaliana (Mouse-ear cress)).